We begin with the raw amino-acid sequence, 187 residues long: Probable chemoreceptor glutamine deamidase CheD 1 (187 aa).

This sequence belongs to the CheD family.

It carries out the reaction L-glutaminyl-[protein] + H2O = L-glutamyl-[protein] + NH4(+). In terms of biological role, probably deamidates glutamine residues to glutamate on methyl-accepting chemotaxis receptors (MCPs), playing an important role in chemotaxis. The chain is Probable chemoreceptor glutamine deamidase CheD 1 from Ruegeria sp. (strain TM1040) (Silicibacter sp.).